We begin with the raw amino-acid sequence, 102 residues long: Protamine-2 (102 aa).

The disordered stretch occupies residues Met1–His102. Residues Ser8, Ser10, and Ser37 each carry the phosphoserine modification. Residues Glu39–His48 are compositionally biased toward basic and acidic residues. A compositionally biased stretch (basic residues) spans Gly49 to His102.

The protein belongs to the protamine P2 family. Interacts with TDRP. In terms of processing, proteolytic processing into mature chains is required for histone eviction during spermatogenesis. Transition proteins (TNP1 and TNP2) are required for processing. As to expression, testis.

It localises to the nucleus. The protein resides in the chromosome. Protamines substitute for histones in the chromatin of sperm during the haploid phase of spermatogenesis. They compact sperm DNA into a highly condensed, stable and inactive complex. This Pan paniscus (Pygmy chimpanzee) protein is Protamine-2 (PRM2).